The sequence spans 138 residues: Small ribosomal subunit protein uS12 (138 aa).

Residues 1 to 20 (MPTISQLINHGRSAKTSKSK) are disordered. The residue at position 102 (D102) is a 3-methylthioaspartic acid. Residues 116–138 (DAAGVDKRKQGRSIYGTKKPKEN) are disordered.

The protein belongs to the universal ribosomal protein uS12 family. As to quaternary structure, part of the 30S ribosomal subunit. Contacts proteins S8 and S17. May interact with IF1 in the 30S initiation complex.

With S4 and S5 plays an important role in translational accuracy. Functionally, interacts with and stabilizes bases of the 16S rRNA that are involved in tRNA selection in the A site and with the mRNA backbone. Located at the interface of the 30S and 50S subunits, it traverses the body of the 30S subunit contacting proteins on the other side and probably holding the rRNA structure together. The combined cluster of proteins S8, S12 and S17 appears to hold together the shoulder and platform of the 30S subunit. In Metamycoplasma arthritidis (strain 158L3-1) (Mycoplasma arthritidis), this protein is Small ribosomal subunit protein uS12.